Reading from the N-terminus, the 357-residue chain is Alanine racemase (357 aa).

The active-site Proton acceptor; specific for D-alanine is Lys-33. Lys-33 carries the N6-(pyridoxal phosphate)lysine modification. Arg-129 is a binding site for substrate. Catalysis depends on Tyr-253, which acts as the Proton acceptor; specific for L-alanine. Met-301 contributes to the substrate binding site.

The protein belongs to the alanine racemase family. In terms of assembly, homodimer. Requires pyridoxal 5'-phosphate as cofactor.

It catalyses the reaction L-alanine = D-alanine. Its pathway is amino-acid biosynthesis; D-alanine biosynthesis; D-alanine from L-alanine: step 1/1. Its function is as follows. Catalyzes the interconversion of L-alanine and D-alanine. Is highly specific for alanine as substrate. May serve both anabolic and catabolic purposes. In Pseudomonas taetrolens, this protein is Alanine racemase.